Reading from the N-terminus, the 161-residue chain is Protein-export protein SecB (161 aa).

Belongs to the SecB family. Homotetramer, a dimer of dimers. One homotetramer interacts with 1 SecA dimer.

The protein resides in the cytoplasm. One of the proteins required for the normal export of preproteins out of the cell cytoplasm. It is a molecular chaperone that binds to a subset of precursor proteins, maintaining them in a translocation-competent state. It also specifically binds to its receptor SecA. The chain is Protein-export protein SecB from Ectopseudomonas mendocina (strain ymp) (Pseudomonas mendocina).